A 101-amino-acid chain; its full sequence is Small ribosomal subunit protein uS14 (101 aa).

Belongs to the universal ribosomal protein uS14 family. In terms of assembly, part of the 30S ribosomal subunit. Contacts proteins S3 and S10.

In terms of biological role, binds 16S rRNA, required for the assembly of 30S particles and may also be responsible for determining the conformation of the 16S rRNA at the A site. The protein is Small ribosomal subunit protein uS14 of Escherichia coli O139:H28 (strain E24377A / ETEC).